A 232-amino-acid polypeptide reads, in one-letter code: Zinc finger protein RTS2 (232 aa).

A C2H2-type zinc finger spans residues 24–48; that stretch reads YYCQICQRQCKDANGFQSHNKSPSH. 2 disordered regions span residues 180–199 and 211–232; these read AKRQTEKVYQPEMKSEISGD and GNGRVNKKKKKVPPRKDGIKFR.

It is found in the nucleus. This is Zinc finger protein RTS2 (RTS2) from Saccharomyces cerevisiae (strain ATCC 204508 / S288c) (Baker's yeast).